Reading from the N-terminus, the 87-residue chain is Small ribosomal subunit protein bS20 (87 aa).

The span at 1-10 (MANIKSKQKR) shows a compositional bias: basic residues. Residues 1-27 (MANIKSKQKRILTNEKSRQRNKSVRSA) form a disordered region.

Belongs to the bacterial ribosomal protein bS20 family.

In terms of biological role, binds directly to 16S ribosomal RNA. The polypeptide is Small ribosomal subunit protein bS20 (Corynebacterium aurimucosum (strain ATCC 700975 / DSM 44827 / CIP 107346 / CN-1) (Corynebacterium nigricans)).